The primary structure comprises 228 residues: Cytidylate kinase (228 aa).

17-25 (GPSASGKGT) lines the ATP pocket.

Belongs to the cytidylate kinase family. Type 1 subfamily.

It localises to the cytoplasm. It catalyses the reaction CMP + ATP = CDP + ADP. It carries out the reaction dCMP + ATP = dCDP + ADP. The sequence is that of Cytidylate kinase from Paraburkholderia phytofirmans (strain DSM 17436 / LMG 22146 / PsJN) (Burkholderia phytofirmans).